Reading from the N-terminus, the 188-residue chain is MKHKVGILGGTFDPPHLAHLRMAEEAKKQLGLEKILFLPNKIPPHKHISGMASNDERVEMLQLMIEGIDSFEIDTRELMRAGKSYTYDTMRDMISEQPDTDFYFIIGGDMVEYLPKWYHIDDLVKMVTFVGVNRPSYQTEVPYDIVKINMPETTISSTEIRNNIENASTFLPEKVWSYIKEHQLYGKK.

It belongs to the NadD family.

The enzyme catalyses nicotinate beta-D-ribonucleotide + ATP + H(+) = deamido-NAD(+) + diphosphate. It functions in the pathway cofactor biosynthesis; NAD(+) biosynthesis; deamido-NAD(+) from nicotinate D-ribonucleotide: step 1/1. Its function is as follows. Catalyzes the reversible adenylation of nicotinate mononucleotide (NaMN) to nicotinic acid adenine dinucleotide (NaAD). The protein is Probable nicotinate-nucleotide adenylyltransferase of Listeria monocytogenes serotype 4b (strain F2365).